The sequence spans 89 residues: Large ribosomal subunit protein bL27 (89 aa).

The interval 1–22 is disordered; the sequence is MAHKKAGGSSRNGRDSESKRLG.

This sequence belongs to the bacterial ribosomal protein bL27 family.

In Bartonella tribocorum (strain CIP 105476 / IBS 506), this protein is Large ribosomal subunit protein bL27.